A 461-amino-acid polypeptide reads, in one-letter code: GTPase Der (461 aa).

EngA-type G domains lie at 2 to 166 and 199 to 370; these read IKVA…PKKP and IKVA…KNYS. GTP-binding positions include 8 to 15, 57 to 61, 118 to 121, 205 to 212, 252 to 256, and 316 to 319; these read GKPNVGKS, DTGGL, NKID, GRVNVGKS, DTAGI, and NKWD. One can recognise a KH-like domain in the interval 371–455; that stretch reads KRIPTATLNK…PIIFVARKKG (85 aa).

The protein belongs to the TRAFAC class TrmE-Era-EngA-EngB-Septin-like GTPase superfamily. EngA (Der) GTPase family. Associates with the 50S ribosomal subunit.

Functionally, GTPase that plays an essential role in the late steps of ribosome biogenesis. This Nautilia profundicola (strain ATCC BAA-1463 / DSM 18972 / AmH) protein is GTPase Der.